Here is a 304-residue protein sequence, read N- to C-terminus: MKKSLTLLILLLCSLLFSTVLSNLLVEPVQPNTVPAFPVETQAQSCRLDLSNELFGGVNEACGRNLDRSRCCPVLAAWLFAAHARSALQLPAPAPTPESSDPDEPMKPDDSQKCVNTLQSALLTKQIKIPQPNSSCDAILCFCGIRLHQISSLSCPAAFNVSSGFKNATPTAAVKNLEKECRNSSYSGCTRCLGALQKLKVRGGNKKTTTERGTKMMSKDCQLMGLTWLLARNKTAYIPTVSAVLRAIMYSPHPPHLNKCSPDQENMPLAVDSLQFQKSFSSSSHLFGVLPFLPLVLCIFLFLL.

Residues 1–22 (MKKSLTLLILLLCSLLFSTVLS) form the signal peptide. The segment at 91–111 (PAPAPTPESSDPDEPMKPDDS) is disordered. Asn133, Asn160, Asn183, and Asn233 each carry an N-linked (GlcNAc...) asparagine glycan. Ser282 is lipidated: GPI-anchor amidated serine. Positions 283–304 (SSHLFGVLPFLPLVLCIFLFLL) are cleaved as a propeptide — removed in mature form.

Its subcellular location is the cell membrane. This is an uncharacterized protein from Arabidopsis thaliana (Mouse-ear cress).